The chain runs to 366 residues: NADH-quinone oxidoreductase subunit D (366 aa).

This sequence belongs to the complex I 49 kDa subunit family. NDH-1 is composed of 14 different subunits. Subunits NuoB, C, D, E, F, and G constitute the peripheral sector of the complex.

The protein resides in the cell membrane. It catalyses the reaction a quinone + NADH + 5 H(+)(in) = a quinol + NAD(+) + 4 H(+)(out). Functionally, NDH-1 shuttles electrons from NADH, via FMN and iron-sulfur (Fe-S) centers, to quinones in the respiratory chain. The immediate electron acceptor for the enzyme in this species is believed to be a menaquinone. Couples the redox reaction to proton translocation (for every two electrons transferred, four hydrogen ions are translocated across the cytoplasmic membrane), and thus conserves the redox energy in a proton gradient. The chain is NADH-quinone oxidoreductase subunit D from Bacillus cereus (strain ZK / E33L).